A 526-amino-acid polypeptide reads, in one-letter code: Arp2/3 complex-activating protein rickA (526 aa).

Residues 305 to 356 are disordered; the sequence is TTSSIAKPLENNVTPPPPLTKNNIPPPPPPPPLSKNNILPPPPPPMPTMAPA. The span at 318–352 shows a compositional bias: pro residues; that stretch reads TPPPPLTKNNIPPPPPPPPLSKNNILPPPPPPMPT. 2 consecutive WH2 domains span residues 383–400 and 410–427; these read DTSDLMREIAGPKNLRKV and SRDLLLQSIRGEHKLRKV. 2 disordered regions span residues 425-452 and 464-526; these read RKVEFDPNTGKPVAHSHSKPAQNVSKPN and MEMS…FVRS. Residues 448–484 form a central and acidic domains region; sequence VSKPNGVASILARRVAMEMSDSSSSSGSESDSGNWSD. Residues 464–480 show a composition bias toward low complexity; it reads MEMSDSSSSSGSESDSG. 2 stretches are compositionally biased toward polar residues: residues 481 to 491 and 506 to 526; these read NWSDASVNSNK and TTHAQKILSNRSSQKPSFVRS.

In terms of assembly, homodimer.

The protein localises to the cell surface. Recruits and activates the Arp2/3 complex, which in turn leads to actin polymerization, promoting Rickettsia motility during infection. This chain is Arp2/3 complex-activating protein rickA (rickA), found in Rickettsia felis (strain ATCC VR-1525 / URRWXCal2) (Rickettsia azadi).